Reading from the N-terminus, the 292-residue chain is NAD(P)H-hydrate epimerase (292 aa).

A mitochondrion-targeting transit peptide spans 1 to 52 (MYGLRTLFSLGLLVGGARLGARVAQVGALGGTCPLGQGLVADGNSQCKQFRT). The region spanning 68 to 279 (AQAVDEELFN…ALEKKYSLNL (212 aa)) is the YjeF N-terminal domain. (6S)-NADPHX is bound at residue 122 to 126 (NNGGD). 2 residues coordinate K(+): N123 and D189. (6S)-NADPHX-binding positions include 193 to 199 (GFSFKGA) and D222. S225 contributes to the K(+) binding site.

This sequence belongs to the NnrE/AIBP family. The cofactor is K(+).

The protein localises to the mitochondrion. It is found in the secreted. It catalyses the reaction (6R)-NADHX = (6S)-NADHX. The catalysed reaction is (6R)-NADPHX = (6S)-NADPHX. Functionally, catalyzes the epimerization of the S- and R-forms of NAD(P)HX, a damaged form of NAD(P)H that is a result of enzymatic or heat-dependent hydration. This is a prerequisite for the S-specific NAD(P)H-hydrate dehydratase to allow the repair of both epimers of NAD(P)HX. In Xenopus tropicalis (Western clawed frog), this protein is NAD(P)H-hydrate epimerase.